Consider the following 364-residue polypeptide: DNA replication and repair protein RecF (364 aa).

30–37 contacts ATP; sequence GDNGAGKT.

Belongs to the RecF family.

The protein localises to the cytoplasm. Functionally, the RecF protein is involved in DNA metabolism; it is required for DNA replication and normal SOS inducibility. RecF binds preferentially to single-stranded, linear DNA. It also seems to bind ATP. The sequence is that of DNA replication and repair protein RecF from Stenotrophomonas maltophilia (strain R551-3).